The following is a 1448-amino-acid chain: ABC transporter G family member 9 (1448 aa).

The span at 16–28 (EGGSNLNINTPSG) shows a compositional bias: polar residues. The tract at residues 16–41 (EGGSNLNINTPSGMSDGDFNSGANSP) is disordered. The ABC transporter 1 domain maps to 136–385 (LFKPSTWKIE…FLDLGFDCEP (250 aa)). Residues 490–717 (WGDKFSLVSR…APYDNSVRVC (228 aa)) enclose the ABC transmembrane type-2 1 domain. The next 7 membrane-spanning stretches (helical) occupy residues 494-514 (FSLV…GSVF), 530-550 (AIFA…FATF), 579-599 (IPLT…MFGL), 604-624 (GKFF…TNMF), 634-654 (LYVS…YCGY), 663-683 (PWFG…ALMA), and 748-768 (LNIF…MVAV). The ABC transporter 2 domain occupies 822–1066 (FTWENIKYTV…LTSYFERQGV (245 aa)). ATP is bound at residue 858–865 (GSSGAGKT). 6 consecutive transmembrane segments (helical) span residues 1157–1177 (FYAY…GFTF), 1191–1211 (IFFI…VMVQ), 1233–1253 (FAIS…SVFF), 1272–1292 (FYFW…GGAI), 1299–1319 (MFLA…FCGV), and 1422–1442 (IAIL…FVYL). The region spanning 1157-1389 (FYAYGSILQA…VPATGYVTNT (233 aa)) is the ABC transmembrane type-2 2 domain.

Belongs to the ABC transporter superfamily. ABCG family. PDR (TC 3.A.1.205) subfamily.

It is found in the membrane. The sequence is that of ABC transporter G family member 9 (abcG9) from Dictyostelium discoideum (Social amoeba).